The chain runs to 179 residues: Natural killer cells antigen CD94 (179 aa).

The Cytoplasmic portion of the chain corresponds to 1 to 10 (MAVSRITRWR). The helical; Signal-anchor for type II membrane protein transmembrane segment at 11–31 (LMSMFFGIKCLFLIVALGVLV) threads the bilayer. At 32–179 (KNSFTIQNIQ…NRFICKQLPT (148 aa)) the chain is on the extracellular side. Disulfide bonds link Cys58–Cys70, Cys61–Cys72, Cys89–Cys174, and Cys152–Cys166. The C-type lectin domain occupies 68–175 (HQCSCYFISK…CENKNRFICK (108 aa)). A glycan (N-linked (GlcNAc...) asparagine) is linked at Asn93.

In terms of assembly, can form disulfide-bonded heterodimer with NKG2 family members KLRC1 and KLRC2. KLRD1-KLRC1 heterodimer interacts with peptide-bound MHC-E-B2M heterotrimeric complex. KLRD1 plays a prominent role in directly interacting with MHC-E. KLRD1-KLRC1 interacts with much higher affinity with peptide-bound MHC-E-B2M than KLRD1-KLRC2. Interacts with the adapter protein TYROBP/DAP12; this interaction is required for cell surface expression and cell activation.

The protein resides in the cell membrane. Immune receptor involved in self-nonself discrimination. In complex with KLRC1 or KLRC2 on cytotoxic and regulatory lymphocyte subsets, recognizes non-classical major histocompatibility (MHC) class Ib molecule MHC-E loaded with self-peptides derived from the signal sequence of classical MHC class Ia and non-classical MHC class Ib molecules. Enables cytotoxic cells to monitor the expression of MHC class I molecules in healthy cells and to tolerate self. Primarily functions as a ligand binding subunit as it lacks the capacity to signal. Its function is as follows. KLRD1-KLRC1 acts as an immune inhibitory receptor. Key inhibitory receptor on natural killer (NK) cells that regulates their activation and effector functions. Dominantly counteracts T cell receptor signaling on a subset of memory/effector CD8-positive T cells as part of an antigen-driven response to avoid autoimmunity. On intraepithelial CD8-positive gamma-delta regulatory T cells triggers TGFB1 secretion, which in turn limits the cytotoxic programming of intraepithelial CD8-positive alpha-beta T cells, distinguishing harmless from pathogenic antigens. In MHC-E-rich tumor microenvironment, acts as an immune inhibitory checkpoint and may contribute to progressive loss of effector functions of NK cells and tumor-specific T cells, a state known as cell exhaustion. Upon MHC-E-peptide binding, transmits intracellular signals through KLRC1 immunoreceptor tyrosine-based inhibition motifs (ITIMs) by recruiting INPP5D/SHIP-1 and INPPL1/SHIP-2 tyrosine phosphatases to ITIMs, and ultimately opposing signals transmitted by activating receptors through dephosphorylation of proximal signaling molecules. Functionally, KLRD1-KLRC2 acts as an immune activating receptor. On cytotoxic lymphocyte subsets recognizes MHC-E loaded with signal sequence-derived peptides from non-classical MHC class Ib MHC-G molecules, likely playing a role in the generation and effector functions of adaptive NK cells and in maternal-fetal tolerance during pregnancy. Regulates the effector functions of terminally differentiated cytotoxic lymphocyte subsets, and in particular may play a role in adaptive NK cell response to viral infection. Upon MHC-E-peptide binding, transmits intracellular signals via the adapter protein TYROBP/DAP12, triggering the phosphorylation of proximal signaling molecules and cell activation. The sequence is that of Natural killer cells antigen CD94 (Klrd1) from Rattus norvegicus (Rat).